The chain runs to 206 residues: Uridine kinase (206 aa).

Residue 11 to 18 (GGTGSGKS) coordinates ATP.

It belongs to the uridine kinase family.

It localises to the cytoplasm. The enzyme catalyses uridine + ATP = UMP + ADP + H(+). It catalyses the reaction cytidine + ATP = CMP + ADP + H(+). Its pathway is pyrimidine metabolism; CTP biosynthesis via salvage pathway; CTP from cytidine: step 1/3. It participates in pyrimidine metabolism; UMP biosynthesis via salvage pathway; UMP from uridine: step 1/1. In Clostridium botulinum (strain Langeland / NCTC 10281 / Type F), this protein is Uridine kinase.